The sequence spans 38 residues: Photosystem II reaction center protein M (38 aa).

The helical transmembrane segment at 5–25 threads the bilayer; sequence ILGLIATALFIVIPTSFLLIL.

It belongs to the PsbM family. As to quaternary structure, PSII is composed of 1 copy each of membrane proteins PsbA, PsbB, PsbC, PsbD, PsbE, PsbF, PsbH, PsbI, PsbJ, PsbK, PsbL, PsbM, PsbT, PsbX, PsbY, PsbZ, Psb30/Ycf12, at least 3 peripheral proteins of the oxygen-evolving complex and a large number of cofactors. It forms dimeric complexes.

The protein localises to the plastid. The protein resides in the cyanelle thylakoid membrane. Its function is as follows. One of the components of the core complex of photosystem II (PSII). PSII is a light-driven water:plastoquinone oxidoreductase that uses light energy to abstract electrons from H(2)O, generating O(2) and a proton gradient subsequently used for ATP formation. It consists of a core antenna complex that captures photons, and an electron transfer chain that converts photonic excitation into a charge separation. This subunit is found at the monomer-monomer interface. The chain is Photosystem II reaction center protein M from Cyanophora paradoxa.